We begin with the raw amino-acid sequence, 551 residues long: Calcium-dependent protein kinase 19 (551 aa).

The N-myristoyl glycine moiety is linked to residue Gly2. The disordered stretch occupies residues 12–46 (VKKPTPDISGEQNTEVKSREITPKEQPRQRQPAPR). Basic and acidic residues predominate over residues 25 to 39 (TEVKSREITPKEQPR). One can recognise a Protein kinase domain in the interval 98-357 (YSLGRELGRG…AAQVLEHPWI (260 aa)). Residues 104 to 112 (LGRGQFGIT) and Lys127 contribute to the ATP site. The Proton acceptor role is filled by Asp222. Ser263 bears the Phosphoserine mark. An autoinhibitory domain region spans residues 363 to 393 (ASDKPIDSAVLSRMKQLRAMNKLKKLAFKFI). EF-hand domains lie at 400 to 435 (EELK…LGSR), 436 to 471 (LTET…RFRV), 472 to 507 (ERED…YNMG), and 512 to 542 (IKEI…CSQS). Ca(2+) contacts are provided by Asp413, Asp415, Ser417, Thr419, Glu424, Asp449, Asp451, Asn453, Thr455, Glu460, Asp485, Asp487, Ser489, Glu496, Asp520, Asp522, Asp524, Ser526, and Glu531.

This sequence belongs to the protein kinase superfamily. Ser/Thr protein kinase family. CDPK subfamily.

It is found in the membrane. It catalyses the reaction L-seryl-[protein] + ATP = O-phospho-L-seryl-[protein] + ADP + H(+). It carries out the reaction L-threonyl-[protein] + ATP = O-phospho-L-threonyl-[protein] + ADP + H(+). Activated by calcium. Autophosphorylation may play an important role in the regulation of the kinase activity. Its function is as follows. May play a role in signal transduction pathways that involve calcium as a second messenger. This is Calcium-dependent protein kinase 19 (CPK19) from Arabidopsis thaliana (Mouse-ear cress).